A 229-amino-acid polypeptide reads, in one-letter code: Large ribosomal subunit protein uL1 (229 aa).

This sequence belongs to the universal ribosomal protein uL1 family. In terms of assembly, part of the 50S ribosomal subunit.

Functionally, binds directly to 23S rRNA. The L1 stalk is quite mobile in the ribosome, and is involved in E site tRNA release. Its function is as follows. Protein L1 is also a translational repressor protein, it controls the translation of the L11 operon by binding to its mRNA. The protein is Large ribosomal subunit protein uL1 of Streptococcus suis (strain 98HAH33).